Reading from the N-terminus, the 125-residue chain is Ribonuclease P protein component (125 aa).

This sequence belongs to the RnpA family. In terms of assembly, consists of a catalytic RNA component (M1 or rnpB) and a protein subunit.

It catalyses the reaction Endonucleolytic cleavage of RNA, removing 5'-extranucleotides from tRNA precursor.. RNaseP catalyzes the removal of the 5'-leader sequence from pre-tRNA to produce the mature 5'-terminus. It can also cleave other RNA substrates such as 4.5S RNA. The protein component plays an auxiliary but essential role in vivo by binding to the 5'-leader sequence and broadening the substrate specificity of the ribozyme. This Clostridium perfringens (strain ATCC 13124 / DSM 756 / JCM 1290 / NCIMB 6125 / NCTC 8237 / Type A) protein is Ribonuclease P protein component.